A 343-amino-acid chain; its full sequence is Mas-related G-protein coupled receptor member F (343 aa).

Over 1-44 the chain is Extracellular; the sequence is MAGNCSWEAHSTNQNKMCPGMSEALELYSRGFLTIEQIATLPPP. N4 carries an N-linked (GlcNAc...) asparagine glycan. Residues 45 to 66 traverse the membrane as a helical segment; it reads AVTNYIFLLLCLCGLVGNGLVL. The Cytoplasmic portion of the chain corresponds to 67–82; that stretch reads WFFGFSIKRTPFSIYF. A helical membrane pass occupies residues 83-104; it reads LHLASADGIYLFSKAVIALLNM. Residues 105-123 lie on the Extracellular side of the membrane; sequence GTFLGSFPDYVRRVSRIVG. The chain crosses the membrane as a helical span at residues 124 to 144; the sequence is LCTFFAGVSLLPAISIERCVS. Topologically, residues 145–160 are cytoplasmic; the sequence is VIFPMWYWRRRPKRLS. The helical transmembrane segment at 161–181 threads the bilayer; sequence AGVCALLWLLSFLVTSIHNYF. Over 182 to 198 the chain is Extracellular; sequence CMFLGHEASGTACLNMD. Residues 199–220 traverse the membrane as a helical segment; that stretch reads ISLGILLFFLFCPLMVLPCLAL. At 221–241 the chain is on the cytoplasmic side; that stretch reads ILHVECRARRRQRSAKLNHVV. A helical membrane pass occupies residues 242–263; the sequence is LAIVSVFLVSSIYLGIDWFLFW. The Extracellular segment spans residues 264-273; that stretch reads VFQIPAPFPE. The helical transmembrane segment at 274–294 threads the bilayer; sequence YVTDLCICINSSAKPIVYFLA. At 295-343 the chain is on the cytoplasmic side; that stretch reads GRDKSQRLWEPLRVVFQRALRDGAEPGDAASSTPNTVTMEMQCPSGNAS. The interval 318 to 343 is disordered; sequence AEPGDAASSTPNTVTMEMQCPSGNAS. Residues 324 to 343 are compositionally biased toward polar residues; sequence ASSTPNTVTMEMQCPSGNAS.

Belongs to the G-protein coupled receptor 1 family. Mas subfamily. In terms of tissue distribution, gut, vas deferens, uterus and aorta; barely detectable in liver, kidney, lung, and salivary gland. In the brain, markedly abundant in the cerebellum.

It is found in the cell membrane. Functionally, orphan receptor. May bind to a neuropeptide and may regulate nociceptor function and/or development, including the sensation or modulation of pain. This chain is Mas-related G-protein coupled receptor member F (Mrgprf), found in Rattus norvegicus (Rat).